A 153-amino-acid polypeptide reads, in one-letter code: Large ribosomal subunit protein uL30 (153 aa).

The protein belongs to the universal ribosomal protein uL30 family. In terms of assembly, part of the 50S ribosomal subunit.

In Methanospirillum hungatei JF-1 (strain ATCC 27890 / DSM 864 / NBRC 100397 / JF-1), this protein is Large ribosomal subunit protein uL30.